Reading from the N-terminus, the 453-residue chain is Gastrin/cholecystokinin type B receptor (453 aa).

The Extracellular segment spans residues methionine 1–arginine 57. N-linked (GlcNAc...) asparagine glycans are attached at residues asparagine 7, asparagine 30, and asparagine 36. The helical transmembrane segment at isoleucine 58–leucine 79 threads the bilayer. Over glycine 80–threonine 87 the chain is Cytoplasmic. The helical transmembrane segment at valine 88–proline 109 threads the bilayer. The Extracellular portion of the chain corresponds to phenylalanine 110–serine 131. A disulfide bridge connects residues cysteine 127 and cysteine 205. Residues tyrosine 132–leucine 150 traverse the membrane as a helical segment. The Cytoplasmic segment spans residues glutamate 151–histidine 170. The helical transmembrane segment at alanine 171–tyrosine 189 threads the bilayer. The Extracellular segment spans residues proline 190 to serine 219. Residues valine 220–serine 242 form a helical membrane-spanning segment. The Cytoplasmic portion of the chain corresponds to arginine 243 to arginine 339. The tract at residues serine 257–proline 276 is disordered. Residues methionine 340 to tryptophan 361 form a helical membrane-spanning segment. Over arginine 362–serine 379 the chain is Extracellular. Residues phenylalanine 380–histidine 400 form a helical membrane-spanning segment. Over arginine 401–glycine 453 the chain is Cytoplasmic. Cysteine 414 is lipidated: S-palmitoyl cysteine.

It belongs to the G-protein coupled receptor 1 family.

The protein resides in the cell membrane. In terms of biological role, receptor for gastrin and cholecystokinin. The CCK-B receptors occur throughout the central nervous system where they modulate anxiety, analgesia, arousal, and neuroleptic activity. This receptor mediates its action by association with G proteins that activate a phosphatidylinositol-calcium second messenger system. The polypeptide is Gastrin/cholecystokinin type B receptor (Cckbr) (Mus musculus (Mouse)).